The following is a 91-amino-acid chain: MARMIQCAKLGKEAEGLDFPPLPGELGKRIYESVSKEAWQGWLKQQTMLINENRLNMADPRARQYLMKQTEKYFFGDGADQASGYVPPTEG.

It belongs to the Fe(2+)-trafficking protein family.

In terms of biological role, could be a mediator in iron transactions between iron acquisition and iron-requiring processes, such as synthesis and/or repair of Fe-S clusters in biosynthetic enzymes. The polypeptide is Probable Fe(2+)-trafficking protein (Burkholderia cenocepacia (strain ATCC BAA-245 / DSM 16553 / LMG 16656 / NCTC 13227 / J2315 / CF5610) (Burkholderia cepacia (strain J2315))).